Consider the following 130-residue polypeptide: MPGLTPPVNYEQVYKVLAIGFLLCASIYCLRSNHLPHVGDNIHSLPHGGNYADGTKRVQYFRPHSSTSTNHKYTALCAVLTLSLLIFAQTRLAAGNRITSVSICHHCSSQGSLSGGNHGRVSGHSELPTT.

Over 1–12 the chain is Cytoplasmic; the sequence is MPGLTPPVNYEQ. A helical membrane pass occupies residues 13-30; sequence VYKVLAIGFLLCASIYCL. At 31–72 the chain is on the lumenal side; it reads RSNHLPHVGDNIHSLPHGGNYADGTKRVQYFRPHSSTSTNHK. The helical transmembrane segment at 73–90 threads the bilayer; it reads YTALCAVLTLSLLIFAQT. The Cytoplasmic segment spans residues 91–130; the sequence is RLAAGNRITSVSICHHCSSQGSLSGGNHGRVSGHSELPTT. The tract at residues 110–130 is disordered; the sequence is QGSLSGGNHGRVSGHSELPTT.

It belongs to the Tymovirales TGBp2 protein family.

Its subcellular location is the host endoplasmic reticulum membrane. Functionally, plays a role in viral cell-to-cell propagation, by facilitating genome transport to neighboring plant cells through plasmosdesmata,. In Narcissus pseudonarcissus (Daffodil), this protein is Movement protein TGB2.